The sequence spans 222 residues: Superoxide dismutase [Mn], mitochondrial (222 aa).

The transit peptide at 1–24 directs the protein to the mitochondrion; sequence MLSRAVCGTGRQLAPALGYLGSRQ. Mn(2+) is bound at residue H50. The residue at position 58 (Y58) is a 3'-nitrotyrosine. K68 and K75 each carry N6-acetyllysine; alternate. K68 and K75 each carry N6-succinyllysine; alternate. Position 98 (H98) interacts with Mn(2+). K114 is modified (N6-acetyllysine). Residues K122 and K130 each carry the N6-acetyllysine; alternate modification. N6-succinyllysine; alternate occurs at positions 122 and 130. 2 residues coordinate Mn(2+): D183 and H187. Residue K202 is modified to N6-acetyllysine.

Belongs to the iron/manganese superoxide dismutase family. Homotetramer. Requires Mn(2+) as cofactor. In terms of processing, nitrated under oxidative stress. Nitration coupled with oxidation inhibits the catalytic activity. Acetylation at Lys-122 decreases enzymatic activity. Deacetylated by SIRT3 upon exposure to ionizing radiations or after long fasting. Post-translationally, polyubiquitinated; leading to proteasomal degradation. Deubiquitinated by USP36 which increases protein stability.

It localises to the mitochondrion matrix. It carries out the reaction 2 superoxide + 2 H(+) = H2O2 + O2. Its function is as follows. Destroys superoxide anion radicals which are normally produced within the cells and which are toxic to biological systems. The protein is Superoxide dismutase [Mn], mitochondrial (SOD2) of Macaca nemestrina (Pig-tailed macaque).